Here is a 61-residue protein sequence, read N- to C-terminus: Bacteriocin leucocin-A (61 aa).

A propeptide spanning residues 1–24 (MMNMKPTESYEQLDNSALEQVVGG) is cleaved from the precursor. A disulfide bridge links Cys33 with Cys38.

This sequence belongs to the bacteriocin class IIA/YGNGV family.

Its subcellular location is the secreted. In terms of biological role, inhibits a wide spectrum of lactic acid bacteria. The polypeptide is Bacteriocin leucocin-A (lcnA) (Leuconostoc gelidum).